The primary structure comprises 105 residues: Ig lambda chain C region (105 aa).

The Ig-like domain occupies 6–100 (PSVILFPPSS…EGHTVEKSLA (95 aa)). Cys27 and Cys86 are disulfide-bonded.

This is Ig lambda chain C region from Oryctolagus cuniculus (Rabbit).